Consider the following 187-residue polypeptide: Protein dj-1beta (187 aa).

A Cysteine sulfinic acid (-SO2H) modification is found at cysteine 45. Residue cysteine 104 is the Nucleophile of the active site. A Cysteine sulfinic acid (-SO2H); alternate modification is found at cysteine 104.

Oxidation of Cys-45 and Cys-104 in response to oxidative stress. Levels of oxidation increase with age. As to expression, expressed in the head and testis (at protein level). Ubiquitously expressed at constant levels.

It localises to the mitochondrion. Its subcellular location is the cytoplasm. It is found in the nucleus. Functionally, plays an important role in cell protection against oxidative stress and cell death by acting as a oxidative stress sensor. Does not play a role in methylglyoxal detoxification. Plays a role in mitochondrial function together with Pink1. In motor neurons regulates structural synaptic plasticity of locomotor behavior as part of the PTEN-phosphatidylinositol 3-kinase pathway in response to oxygen species (ROS) levels. The polypeptide is Protein dj-1beta (Drosophila melanogaster (Fruit fly)).